The primary structure comprises 421 residues: UDP-N-acetylglucosamine 1-carboxyvinyltransferase 1 (421 aa).

22–23 lines the phosphoenolpyruvate pocket; that stretch reads KN. Arginine 95 provides a ligand contact to UDP-N-acetyl-alpha-D-glucosamine. Residue cysteine 119 is the Proton donor of the active site. A 2-(S-cysteinyl)pyruvic acid O-phosphothioketal modification is found at cysteine 119. UDP-N-acetyl-alpha-D-glucosamine is bound by residues 124 to 128, aspartate 308, and valine 330; that span reads RPIEQ.

Belongs to the EPSP synthase family. MurA subfamily.

The protein resides in the cytoplasm. The enzyme catalyses phosphoenolpyruvate + UDP-N-acetyl-alpha-D-glucosamine = UDP-N-acetyl-3-O-(1-carboxyvinyl)-alpha-D-glucosamine + phosphate. It functions in the pathway cell wall biogenesis; peptidoglycan biosynthesis. Functionally, cell wall formation. Adds enolpyruvyl to UDP-N-acetylglucosamine. This chain is UDP-N-acetylglucosamine 1-carboxyvinyltransferase 1, found in Staphylococcus aureus (strain bovine RF122 / ET3-1).